The primary structure comprises 99 residues: Protein MOST-1 (99 aa).

In terms of assembly, interacts with TSPO, IGHM and IGHD. As to expression, expressed in the heart, kidney, liver, pancreas, small intestine, ovary, testis, prostate and thymus. Expressed in all of the cancer cell lines tested.

Its subcellular location is the cytoplasm. The protein localises to the microsome membrane. It is found in the endoplasmic reticulum membrane. Functionally, may be involved in cell survival, proliferation and progression of cancer cells. This Homo sapiens (Human) protein is Protein MOST-1 (C8orf17).